Here is an 87-residue protein sequence, read N- to C-terminus: Phosphoribosyl-ATP pyrophosphatase (87 aa).

It belongs to the PRA-PH family.

It localises to the cytoplasm. It catalyses the reaction 1-(5-phospho-beta-D-ribosyl)-ATP + H2O = 1-(5-phospho-beta-D-ribosyl)-5'-AMP + diphosphate + H(+). The protein operates within amino-acid biosynthesis; L-histidine biosynthesis; L-histidine from 5-phospho-alpha-D-ribose 1-diphosphate: step 2/9. In Beutenbergia cavernae (strain ATCC BAA-8 / DSM 12333 / CCUG 43141 / JCM 11478 / NBRC 16432 / NCIMB 13614 / HKI 0122), this protein is Phosphoribosyl-ATP pyrophosphatase.